The sequence spans 125 residues: UPF0231 protein HD_1708 (125 aa).

Belongs to the UPF0231 family.

This is UPF0231 protein HD_1708 from Haemophilus ducreyi (strain 35000HP / ATCC 700724).